Reading from the N-terminus, the 197-residue chain is MSLSIDVTSLPSISSNIFKNESSSTTSTLSGKSIGRNEQYVSSDIEAFNKYMLSKSPEDIGPSDSASNDPLTSFSIRSNAVKTNADAGVSMDSSTQSRPSSNVGCDQMDFSLTKGINVSASLDSCVSISTNHKKEKSKKDKSRKHYPRIEADSDSEDYVLDDSDSDDGKCKNCKYKKKYFALRMRMKQVAMQLIEDL.

The disordered stretch occupies residues 16 to 36; the sequence is NIFKNESSSTTSTLSGKSIGR. Serine 67 bears the Phosphoserine; by host CK1 mark. Aspartate 92 serves as a coordination point for Mg(2+). The interval 130-167 is disordered; the sequence is TNHKKEKSKKDKSRKHYPRIEADSDSEDYVLDDSDSDD. The span at 131–146 shows a compositional bias: basic residues; sequence NHKKEKSKKDKSRKHY. Residues 152–165 show a composition bias toward acidic residues; it reads DSDSEDYVLDDSDS. 4 positions are modified to phosphoserine; by host: serine 153, serine 155, serine 163, and serine 165.

It belongs to the rotavirus NSP5 family. In terms of assembly, homodimer. Interacts with VP1. Interacts with VP2. Interacts with NSP2; this interaction leads to up-regulation of NSP5 hyperphosphorylation and formation of virus factories. Interacts with NSP6. Participates in the selective exclusion of host proteins from stress granules (SG) and P bodies (PB). Also participates in the sequestration of these remodeled organelles in viral factories. It depends on Mg(2+) as a cofactor. In terms of processing, O-glycosylated. Post-translationally, hyperphosphorylated on serine residues, when in dimeric form. Phosphorylation by host CK1 is required for the hyperphosphorylation of NSP5 dimer.

It is found in the host cytoplasm. Functionally, plays an essential role in the viral genome replication. Participates, together with NSP2, in the formation of viral factories (viroplasms), which are large inclusions in the host cytoplasm where replication intermediates are assembled and viral RNA replication takes place. Orchestrates the recruitment of viroplasmic proteins such as capsid proteins to these factories. Participates in the selective exclusion of host proteins from stress granules (SG) and P bodies (PB). Also participates in the sequestration of these remodeled organelles in viral factories. The chain is Non-structural protein 5 from Homo sapiens (Human).